Here is a 354-residue protein sequence, read N- to C-terminus: Galactoside alpha-(1,2)-fucosyltransferase 2 (354 aa).

At 1-22 (MRFAPDYVLCPPTATRRLRATH) the chain is on the cytoplasmic side. A helical; Signal-anchor for type II membrane protein membrane pass occupies residues 23-43 (PSVSTIYFLFTIFVVSTVFHC). Residues 44 to 354 (HQRLALVPAP…NMGRALWSGL (311 aa)) are Lumenal-facing. N-linked (GlcNAc...) asparagine glycans are attached at residues asparagine 197, asparagine 291, and asparagine 317.

The protein belongs to the glycosyltransferase 11 family. As to expression, salivary and lactating mammary glands.

It is found in the golgi apparatus. The protein resides in the golgi stack membrane. The enzyme catalyses a beta-D-galactosyl-(1-&gt;3)-N-acetyl-beta-D-glucosaminyl derivative + GDP-beta-L-fucose = an alpha-L-Fuc-(1-&gt;2)-beta-D-Gal-(1-&gt;3)-beta-D-GlcNAc derivative + GDP + H(+). The catalysed reaction is a beta-D-galactosyl-(1-&gt;4)-N-acetyl-beta-D-glucosaminyl derivative + GDP-beta-L-fucose = an alpha-L-Fuc-(1-&gt;2)-beta-D-Gal-(1-&gt;4)-beta-D-GlcNAc derivative + GDP + H(+). It carries out the reaction a neolactoside nLc4Cer + GDP-beta-L-fucose = a neolactoside IV(2)-alpha-Fuc-nLc4Cer + GDP + H(+). It catalyses the reaction a neolactoside nLc4Cer(d18:1(4E)) + GDP-beta-L-fucose = a neolactoside IV(2)-alpha-Fuc-nLc4Cer(d18:1(4E)) + GDP + H(+). The enzyme catalyses a ganglioside GM1 + GDP-beta-L-fucose = a ganglioside Fuc-GM1 + GDP + H(+). The catalysed reaction is a ganglioside GA1 + GDP-beta-L-fucose = a ganglioside Fuc-GA1 + GDP + H(+). It carries out the reaction Lc4Cer + GDP-beta-L-fucose = alpha-L-fucosyl-(1-&gt;2)-beta-D-galactosyl-(1-&gt;3)-N-acetyl-beta-D-glucosaminyl-(1-&gt;3)-beta-D-galactosyl-(1-&gt;4)-beta-D-glucosyl-(1&lt;-&gt;1')-ceramide + GDP + H(+). It catalyses the reaction a beta-D-Gal-(1-&gt;3)-beta-D-GlcNAc-(1-&gt;3)-beta-D-Gal-(1-&gt;4)-beta-D-Glc-(1&lt;-&gt;1')-Cer(d18:1(4E)) + GDP-beta-L-fucose = alpha-L-fucosyl-(1-&gt;2)- beta-D-galactosyl-(1-&gt;3)-N-acetyl-beta-D-glucosaminyl-(1-&gt;3)-beta-D-galactosyl-(1-&gt;4)-beta-D-glucosyl-(1&lt;-&gt;1')-N-acylsphing-4-enine + GDP + H(+). The enzyme catalyses a ganglioside GD1b + GDP-beta-L-fucose = a ganglioside Fuc-GD1b + GDP + H(+). The catalysed reaction is a ganglioside GM1 (d18:1(4E)) + GDP-beta-L-fucose = a ganglioside Fuc-GM1 (d18:1(4E)) + GDP + H(+). It carries out the reaction a globoside GalGb4Cer (d18:1(4E)) + GDP-beta-L-fucose = a globoside Globo-H (d18:1(4E)) + GDP + H(+). It catalyses the reaction a lactoside III(4)-a-Fuc-Lc4Cer + GDP-beta-L-fucose = a lactoside IV(2),III(4)-a-[Fuc]2-Lc4Cer + GDP + H(+). The enzyme catalyses beta-D-galactosyl-(1-&gt;3)-N-acetyl-D-galactosamine + GDP-beta-L-fucose = alpha-L-fucosyl-(1-&gt;2)-beta-D-galactosyl-(1-&gt;3)-N-acetyl-D-galactosamine + GDP + H(+). It participates in protein modification; protein glycosylation. Functionally, catalyzes the transfer of L-fucose, from a guanosine diphosphate-beta-L-fucose, to the terminal galactose on both O- and N-linked glycans chains of cell surface glycoproteins and glycolipids and the resulting epitope regulates several processes such as cell-cell interaction including host-microbe interaction, cell surface expression and cell proliferation. Preferentially fucosylates gangliosides GA1 and GM1 in the antrum, cecum and colon and in the female reproductive organs. Fucosylated host glycoproteins or glycolipids mediate interaction with intestinal microbiota influencing its composition. Creates a soluble precursor oligosaccharide FuC-alpha ((1,2)Galbeta-) called the H antigen which is an essential substrate for the final step in the soluble ABO blood group antigen synthesis pathway. The chain is Galactoside alpha-(1,2)-fucosyltransferase 2 from Oryctolagus cuniculus (Rabbit).